Here is a 241-residue protein sequence, read N- to C-terminus: uncharacterized protein (241 aa).

A run of 7 helical transmembrane segments spans residues 12–32, 39–59, 89–109, 117–137, 152–172, 180–200, and 215–235; these read ITEI…LLLL, LLWL…EMKF, VYDV…ICYT, YYTF…NCVV, LFEY…ATML, IHFY…WFVY, and YVEA…SPLI.

The protein belongs to the mimivirus L68/R809 family.

It is found in the membrane. This is an uncharacterized protein from Acanthamoeba polyphaga mimivirus (APMV).